Reading from the N-terminus, the 325-residue chain is ATP phosphoribosyltransferase (325 aa).

This sequence belongs to the ATP phosphoribosyltransferase family. Long subfamily. It depends on Mg(2+) as a cofactor.

The protein resides in the cytoplasm. The enzyme catalyses 1-(5-phospho-beta-D-ribosyl)-ATP + diphosphate = 5-phospho-alpha-D-ribose 1-diphosphate + ATP. The protein operates within amino-acid biosynthesis; L-histidine biosynthesis; L-histidine from 5-phospho-alpha-D-ribose 1-diphosphate: step 1/9. With respect to regulation, feedback inhibited by histidine. In terms of biological role, catalyzes the condensation of ATP and 5-phosphoribose 1-diphosphate to form N'-(5'-phosphoribosyl)-ATP (PR-ATP). Has a crucial role in the pathway because the rate of histidine biosynthesis seems to be controlled primarily by regulation of HisG enzymatic activity. This Nitrobacter winogradskyi (strain ATCC 25391 / DSM 10237 / CIP 104748 / NCIMB 11846 / Nb-255) protein is ATP phosphoribosyltransferase.